Consider the following 175-residue polypeptide: MPVSLTYLGIDPGLTATGWGVIGISGSRLTHIANGTITSNARLSLAERLVQIEAGLVQVIHEHAPDAAAVEQAFVARDASAALKLGQARAIALLVSARAGLAVAEYAPNHVKKSVVGAGHADKSQIRLMVEMLLPGAKAGSEHAADALALAICHAHSGSANERIAAALLRAGAGR.

Catalysis depends on residues Asp-11, Glu-71, and His-143. Residues Asp-11, Glu-71, and His-143 each coordinate Mg(2+).

This sequence belongs to the RuvC family. Homodimer which binds Holliday junction (HJ) DNA. The HJ becomes 2-fold symmetrical on binding to RuvC with unstacked arms; it has a different conformation from HJ DNA in complex with RuvA. In the full resolvosome a probable DNA-RuvA(4)-RuvB(12)-RuvC(2) complex forms which resolves the HJ. It depends on Mg(2+) as a cofactor.

It is found in the cytoplasm. It catalyses the reaction Endonucleolytic cleavage at a junction such as a reciprocal single-stranded crossover between two homologous DNA duplexes (Holliday junction).. In terms of biological role, the RuvA-RuvB-RuvC complex processes Holliday junction (HJ) DNA during genetic recombination and DNA repair. Endonuclease that resolves HJ intermediates. Cleaves cruciform DNA by making single-stranded nicks across the HJ at symmetrical positions within the homologous arms, yielding a 5'-phosphate and a 3'-hydroxyl group; requires a central core of homology in the junction. The consensus cleavage sequence is 5'-(A/T)TT(C/G)-3'. Cleavage occurs on the 3'-side of the TT dinucleotide at the point of strand exchange. HJ branch migration catalyzed by RuvA-RuvB allows RuvC to scan DNA until it finds its consensus sequence, where it cleaves and resolves the cruciform DNA. In Parvibaculum lavamentivorans (strain DS-1 / DSM 13023 / NCIMB 13966), this protein is Crossover junction endodeoxyribonuclease RuvC.